Here is a 98-residue protein sequence, read N- to C-terminus: NADH-ubiquinone oxidoreductase chain 4L (98 aa).

The next 3 helical transmembrane spans lie at 1-21, 29-49, and 61-81; these read MSLI…GLLM, ALLC…LTIL, and IILL…LVMI.

Belongs to the complex I subunit 4L family. In terms of assembly, core subunit of respiratory chain NADH dehydrogenase (Complex I) which is composed of 45 different subunits.

It is found in the mitochondrion inner membrane. The catalysed reaction is a ubiquinone + NADH + 5 H(+)(in) = a ubiquinol + NAD(+) + 4 H(+)(out). Its function is as follows. Core subunit of the mitochondrial membrane respiratory chain NADH dehydrogenase (Complex I) which catalyzes electron transfer from NADH through the respiratory chain, using ubiquinone as an electron acceptor. Part of the enzyme membrane arm which is embedded in the lipid bilayer and involved in proton translocation. The protein is NADH-ubiquinone oxidoreductase chain 4L (MT-ND4L) of Berardius bairdii (Baird's beaked whale).